The sequence spans 1150 residues: Serine/threonine-protein phosphatase 2A regulatory subunit B'' subunit alpha (1150 aa).

The disordered stretch occupies residues 661 to 693; it reads PEVIKIQNKPEKKPGTPLPPPATSPSSPRPLSP. Residues 676–693 show a composition bias toward pro residues; sequence TPLPPPATSPSSPRPLSP. EF-hand domains are found at residues 758-793 and 972-1007; these read CPLY…LLNN and RNPT…QCER. Residues Asp-985, Asp-987, Asp-989, and Glu-996 each contribute to the Ca(2+) site. Residues 1105–1132 form a disordered region; that stretch reads AQFQEGFEDYETDEPASPSEFGNKSNKI.

PP2A consists of a common heterodimeric core enzyme, composed of a 36 kDa catalytic subunit (subunit C) and a 65 kDa constant regulatory subunit (PR65 or subunit A), that associates with a variety of regulatory subunits. Proteins that associate with the core dimer include three families of regulatory subunits B (the R2/B/PR55/B55, R3/B''/PR72/PR130/PR59 and R5/B'/B56 families), the 48 kDa variable regulatory subunit, viral proteins, and cell signaling molecules. Expressed in heart, brain, placenta, lung, muscle and kidney.

Its function is as follows. The B regulatory subunit might modulate substrate selectivity and catalytic activity, and might also direct the localization of the catalytic enzyme to a particular subcellular compartment. In Homo sapiens (Human), this protein is Serine/threonine-protein phosphatase 2A regulatory subunit B'' subunit alpha (PPP2R3A).